The chain runs to 60 residues: MTTQQTIKVQLIRSPIGCQESHRATVRGLGLRKIRSTSELVDTPEVRGMINKISYLIKVL.

This sequence belongs to the universal ribosomal protein uL30 family. Part of the 50S ribosomal subunit.

The protein is Large ribosomal subunit protein uL30 of Albidiferax ferrireducens (strain ATCC BAA-621 / DSM 15236 / T118) (Rhodoferax ferrireducens).